The following is a 294-amino-acid chain: Nucleotide-binding protein Dde_1774 (294 aa).

Residue 14-21 participates in ATP binding; sequence GLSGAGKS. Residue 66–69 participates in GTP binding; it reads DLRQ.

This sequence belongs to the RapZ-like family.

Functionally, displays ATPase and GTPase activities. This is Nucleotide-binding protein Dde_1774 from Oleidesulfovibrio alaskensis (strain ATCC BAA-1058 / DSM 17464 / G20) (Desulfovibrio alaskensis).